The sequence spans 466 residues: MADAASLRAPLCTEQFGSGAPRGCSAAADGSLQWDGARRWGWLSRAPIAKPGQHAGGGGGPWAALTALSGLRSVLLPQGFPDSVSPDYLPYQLWDSVQAFASSLSGSLATQAVLQGLGVGNAKASVSAATSTWLVKDSTGMLGRIILAWWKGSKLDCNAKQWRLFADILNDVAMFLEIMAPMYPIFFTMTVSTSNLAKCIVGVAGGATRAALTMHQARRNNMADVSAKDSSQETVVNLAGLLVSLLMLPLVSDCPSLSLGCFVLLTALHIYANYRAVRALVLETLNESRLQLVLEHFLQRGEVLEPASANQMEPLWTGFWPSLSLSLGVPLHHLVSSVSELKQLVEGHHEPYLLCWNKSRNQVQVALSQEAGPETVLRAATHGLILGALQEDGPLPGELAELRHQVQADPKKESWILVRETHQVLDTLFPKFLKGLQAAGWKTEKHHLEVDEWRATWPLSPEKKVL.

At A2 the chain carries N-acetylalanine. The chain crosses the membrane as a helical span at residues 245–265; that stretch reads LLMLPLVSDCPSLSLGCFVLL.

Belongs to the RUS1 family.

The protein localises to the membrane. In Mus musculus (Mouse), this protein is RUS family member 1.